Here is a 192-residue protein sequence, read N- to C-terminus: Elongation factor P (192 aa).

Belongs to the elongation factor P family.

Its subcellular location is the cytoplasm. It functions in the pathway protein biosynthesis; polypeptide chain elongation. In terms of biological role, involved in peptide bond synthesis. Stimulates efficient translation and peptide-bond synthesis on native or reconstituted 70S ribosomes in vitro. Probably functions indirectly by altering the affinity of the ribosome for aminoacyl-tRNA, thus increasing their reactivity as acceptors for peptidyl transferase. The polypeptide is Elongation factor P (efp) (Borreliella burgdorferi (strain ATCC 35210 / DSM 4680 / CIP 102532 / B31) (Borrelia burgdorferi)).